Here is a 157-residue protein sequence, read N- to C-terminus: MSTLNGQTALAYAKVWHHVSAKNVPLGRLASQIATTLMGKHKPIYHPAADCGDVVVVTDCSEIGISGRKLENHKYYSHSGQPGHLKEWTMEEMAAKRGHKDLLRRAVGGMLPRNKLWDRRMKRLYIYDGAEHPYKANIFRSYHNPVSSQIAKELFSK.

A mitochondrion-targeting transit peptide spans 1 to 29 (MSTLNGQTALAYAKVWHHVSAKNVPLGRL).

This sequence belongs to the universal ribosomal protein uL13 family. As to quaternary structure, component of the mitochondrial large ribosomal subunit (mt-LSU). Mature yeast 74S mitochondrial ribosomes consist of a small (37S) and a large (54S) subunit. The 37S small subunit contains a 15S ribosomal RNA (15S mt-rRNA) and at least 32 different proteins. The 54S large subunit contains a 21S rRNA (21S mt-rRNA) and at least 45 different proteins.

Its subcellular location is the mitochondrion. Its function is as follows. Component of the mitochondrial ribosome (mitoribosome), a dedicated translation machinery responsible for the synthesis of mitochondrial genome-encoded proteins, including at least some of the essential transmembrane subunits of the mitochondrial respiratory chain. The mitoribosomes are attached to the mitochondrial inner membrane and translation products are cotranslationally integrated into the membrane. In Schizosaccharomyces pombe (strain 972 / ATCC 24843) (Fission yeast), this protein is Large ribosomal subunit protein uL13m.